The chain runs to 289 residues: Syntaxin-3 (289 aa).

The Cytoplasmic segment spans residues 1-263 (MKDRLEQLKA…VKYQSQARKK (263 aa)). Positions 32 to 111 (MDEFFSEIEE…IEEDEVRSSA (80 aa)) form a coiled coil. Residues 191 to 253 (LSEIEGRHKD…EKARDETKKA (63 aa)) enclose the t-SNARE coiled-coil homology domain. The chain crosses the membrane as a helical; Anchor for type IV membrane protein span at residues 264–284 (LIIIIVLVVVLLGILALIIGL). Over 285-289 (SVGLN) the chain is Extracellular.

Belongs to the syntaxin family. As to quaternary structure, interacts with REEP6. Interacts with PRPH2 in rod and cone photoreceptors. Interacts with ROM1. Interacts with SNAP25. Interacts with VAMP2. Interacts with IPO5. Expressed in small intestine, kidney, pancreas, placenta as well as in retina. Weaker expression in lung, liver and heart. Not expressed in brain and skeletal muscle. In terms of tissue distribution, expressed only in the retina. As to expression, ubiquitously expressed.

It localises to the apical cell membrane. It is found in the nucleus. Functionally, potentially involved in docking of synaptic vesicles at presynaptic active zones. Apical receptor involved in membrane fusion of apical vesicles. In terms of biological role, essential for survival of retinal photoreceetors. Its function is as follows. Functions as a regulator of gene expression. This Homo sapiens (Human) protein is Syntaxin-3 (STX3).